We begin with the raw amino-acid sequence, 491 residues long: Probable cytosol aminopeptidase (491 aa).

Mn(2+) is bound by residues Lys261 and Asp266. Lys273 is a catalytic residue. Positions 284, 343, and 345 each coordinate Mn(2+). Arg347 is a catalytic residue.

This sequence belongs to the peptidase M17 family. Requires Mn(2+) as cofactor.

It localises to the cytoplasm. It carries out the reaction Release of an N-terminal amino acid, Xaa-|-Yaa-, in which Xaa is preferably Leu, but may be other amino acids including Pro although not Arg or Lys, and Yaa may be Pro. Amino acid amides and methyl esters are also readily hydrolyzed, but rates on arylamides are exceedingly low.. The catalysed reaction is Release of an N-terminal amino acid, preferentially leucine, but not glutamic or aspartic acids.. In terms of biological role, presumably involved in the processing and regular turnover of intracellular proteins. Catalyzes the removal of unsubstituted N-terminal amino acids from various peptides. This is Probable cytosol aminopeptidase from Geobacter sp. (strain M21).